Here is a 337-residue protein sequence, read N- to C-terminus: Cysteinyl leukotriene receptor 1 (337 aa).

Over 1–28 the chain is Extracellular; the sequence is MDETGNLTVSSATCHDTIDDFRNQVYST. N-linked (GlcNAc...) asparagine glycosylation occurs at asparagine 6. The chain crosses the membrane as a helical span at residues 29 to 49; that stretch reads LYSMISVVGFFGNGFVLYVLI. Residues 50 to 57 lie on the Cytoplasmic side of the membrane; sequence KTYHKKSA. Residues 58 to 78 traverse the membrane as a helical segment; that stretch reads FQVYMINLAVADLLCVCTLPL. Residues 79 to 106 lie on the Extracellular side of the membrane; it reads RVVYYVHKGIWLFGDFLCRLSTYALYVN. The cysteines at positions 96 and 173 are disulfide-linked. Residues 107–127 traverse the membrane as a helical segment; the sequence is LYCSIFFMTAMSFFRCIAIVF. Residues 128–141 are Cytoplasmic-facing; the sequence is PVQNINLVTQKKAR. A helical membrane pass occupies residues 142–162; sequence FVCVGIWIFVILTSSPFLMAK. Residues 163–193 are Extracellular-facing; the sequence is PQKDEKNNTKCFEPPQDNQTKNHVLVLHYVS. N-linked (GlcNAc...) asparagine glycosylation is found at asparagine 169 and asparagine 180. The chain crosses the membrane as a helical span at residues 194-214; that stretch reads LFVGFIIPFVIIIVCYTMIIL. Topologically, residues 215-230 are cytoplasmic; that stretch reads TLLKKSMKKNLSSHKK. A helical membrane pass occupies residues 231-251; sequence AIGMIMVVTAAFLVSFMPYHI. Over 252-276 the chain is Extracellular; it reads QRTIHLHFLHNETKPCDSVLRMQKS. Residue asparagine 262 is glycosylated (N-linked (GlcNAc...) asparagine). The chain crosses the membrane as a helical span at residues 277 to 297; it reads VVITLSLAASNCCFDPLLYFF. At 298 to 337 the chain is on the cytoplasmic side; it reads SGGNFRKRLSTFRKHSLSSVTYVPRKKASLPEKGEEICKV.

Belongs to the G-protein coupled receptor 1 family. In terms of tissue distribution, widely expressed, with highest levels in spleen and peripheral blood leukocytes. Lower expression in several tissues, such as lung (mostly in smooth muscle bundles and alveolar macrophages), placenta, small intestine, pancreas, colon and heart.

Its subcellular location is the cell membrane. Its function is as follows. Receptor for cysteinyl leukotrienes mediating bronchoconstriction of individuals with and without asthma. Stimulation by LTD4 results in the contraction and proliferation of smooth muscle, edema, eosinophil migration and damage to the mucus layer in the lung. This response is mediated via a G-protein that activates a phosphatidylinositol-calcium second messenger system. The rank order of affinities for the leukotrienes is LTD4 &gt;&gt; LTE4 = LTC4 &gt;&gt; LTB4. The chain is Cysteinyl leukotriene receptor 1 (CYSLTR1) from Homo sapiens (Human).